The primary structure comprises 249 residues: Olfactory receptor 1571 (249 aa).

The chain crosses the membrane as a helical span at residues 1–9 (LLMCNLCFA). Residues 10–40 (DICFTSASIPTNLVNIQTKNKVITYEGCISQ) lie on the Extracellular side of the membrane. Cys37 and Cys119 are oxidised to a cystine. The helical transmembrane segment at 41–60 (VYFFILFGVLDNFLLAVMAY) threads the bilayer. Residues 61–82 (DRYVAICHPLHYTVIMNRRLCG) are Cytoplasmic-facing. A helical transmembrane segment spans residues 83 to 103 (LLVLGSWVTTALNSLLQSSMA). Residues 104–136 (LRLSFCTDLKIPHFVCELNQLVLLACNDTFPND) lie on the Extracellular side of the membrane. An N-linked (GlcNAc...) asparagine glycan is attached at Asn130. A helical transmembrane segment spans residues 137-158 (MVMYFAAVLLGGGPLAGILYSY). Over 159–180 (SKIVSSIRAISSSQGKYKAFST) the chain is Cytoplasmic. A helical transmembrane segment spans residues 181-200 (CASHLSVVSLFYSTLLGVYL). Residues 201–210 (SSSFTQNSHS) are Extracellular-facing. Residues 211–232 (TARASVMYSVVTPMLNPFIYSL) traverse the membrane as a helical segment. At 233–249 (RNKDLMGALRRLFRRKP) the chain is on the cytoplasmic side.

This sequence belongs to the G-protein coupled receptor 1 family. Tongue specific.

The protein localises to the cell membrane. Functionally, possible taste receptor. This chain is Olfactory receptor 1571 (Olr1571), found in Rattus norvegicus (Rat).